The following is a 287-amino-acid chain: Arylamine N-acetyltransferase, liver isozyme (287 aa).

Cys68 serves as the catalytic Acyl-thioester intermediate. Catalysis depends on residues His107 and Asp122.

This sequence belongs to the arylamine N-acetyltransferase family.

It carries out the reaction an arylamine + acetyl-CoA = an N-acetylarylamine + CoA. The polypeptide is Arylamine N-acetyltransferase, liver isozyme (Gallus gallus (Chicken)).